Here is a 318-residue protein sequence, read N- to C-terminus: Ribonuclease Z (318 aa).

Residues histidine 62, histidine 64, aspartate 66, histidine 67, histidine 144, aspartate 215, and histidine 273 each coordinate Zn(2+). The active-site Proton acceptor is aspartate 66.

The protein belongs to the RNase Z family. As to quaternary structure, homodimer. Zn(2+) serves as cofactor.

The catalysed reaction is Endonucleolytic cleavage of RNA, removing extra 3' nucleotides from tRNA precursor, generating 3' termini of tRNAs. A 3'-hydroxy group is left at the tRNA terminus and a 5'-phosphoryl group is left at the trailer molecule.. Functionally, zinc phosphodiesterase, which displays some tRNA 3'-processing endonuclease activity. Probably involved in tRNA maturation, by removing a 3'-trailer from precursor tRNA. The polypeptide is Ribonuclease Z (Prochlorococcus marinus (strain MIT 9303)).